A 197-amino-acid chain; its full sequence is Negative modulator of initiation of replication (197 aa).

It belongs to the SeqA family. As to quaternary structure, homodimer. Polymerizes to form helical filaments.

The protein resides in the cytoplasm. Functionally, negative regulator of replication initiation, which contributes to regulation of DNA replication and ensures that replication initiation occurs exactly once per chromosome per cell cycle. Binds to pairs of hemimethylated GATC sequences in the oriC region, thus preventing assembly of replication proteins and re-initiation at newly replicated origins. Repression is relieved when the region becomes fully methylated. The sequence is that of Negative modulator of initiation of replication from Pseudoalteromonas translucida (strain TAC 125).